The chain runs to 43 residues: Truncated K3L homolog (43 aa).

This sequence belongs to the orthopoxvirus OPG041 family.

The chain is Truncated K3L homolog (OPG041) from Cynomys gunnisoni (Gunnison's prairie dog).